We begin with the raw amino-acid sequence, 67 residues long: Large ribosomal subunit protein bL31 (67 aa).

This sequence belongs to the bacterial ribosomal protein bL31 family. Type A subfamily. In terms of assembly, part of the 50S ribosomal subunit.

Its function is as follows. Binds the 23S rRNA. The sequence is that of Large ribosomal subunit protein bL31 from Finegoldia magna (strain ATCC 29328 / DSM 20472 / WAL 2508) (Peptostreptococcus magnus).